A 124-amino-acid polypeptide reads, in one-letter code: T cell receptor beta variable 13 (124 aa).

An N-terminal signal peptide occupies residues 1 to 31 (MLSPDLPDSAWNTRLLCRVMLCLLGAGSVAA). An Ig-like domain is found at 32–124 (GVIQSPRHLI…SALYFCASSL (93 aa)). Cys-52 and Cys-120 are disulfide-bonded. An N-linked (GlcNAc...) asparagine glycan is attached at Asn-106.

In terms of assembly, alpha-beta TR is a heterodimer composed of an alpha and beta chain; disulfide-linked. The alpha-beta TR is associated with the transmembrane signaling CD3 coreceptor proteins to form the TR-CD3 (TcR or TCR). The assembly of alpha-beta TR heterodimers with CD3 occurs in the endoplasmic reticulum where a single alpha-beta TR heterodimer associates with one CD3D-CD3E heterodimer, one CD3G-CD3E heterodimer and one CD247 homodimer forming a stable octameric structure. CD3D-CD3E and CD3G-CD3E heterodimers preferentially associate with TR alpha and TR beta chains, respectively. The association of the CD247 homodimer is the last step of TcR assembly in the endoplasmic reticulum and is required for transport to the cell surface.

It is found in the cell membrane. Its function is as follows. V region of the variable domain of T cell receptor (TR) beta chain that participates in the antigen recognition. Alpha-beta T cell receptors are antigen specific receptors which are essential to the immune response and are present on the cell surface of T lymphocytes. Recognize peptide-major histocompatibility (MH) (pMH) complexes that are displayed by antigen presenting cells (APC), a prerequisite for efficient T cell adaptive immunity against pathogens. Binding of alpha-beta TR to pMH complex initiates TR-CD3 clustering on the cell surface and intracellular activation of LCK that phosphorylates the ITAM motifs of CD3G, CD3D, CD3E and CD247 enabling the recruitment of ZAP70. In turn ZAP70 phosphorylates LAT, which recruits numerous signaling molecules to form the LAT signalosome. The LAT signalosome propagates signal branching to three major signaling pathways, the calcium, the mitogen-activated protein kinase (MAPK) kinase and the nuclear factor NF-kappa-B (NF-kB) pathways, leading to the mobilization of transcription factors that are critical for gene expression and essential for T cell growth and differentiation. The T cell repertoire is generated in the thymus, by V-(D)-J rearrangement. This repertoire is then shaped by intrathymic selection events to generate a peripheral T cell pool of self-MH restricted, non-autoaggressive T cells. Post-thymic interaction of alpha-beta TR with the pMH complexes shapes TR structural and functional avidity. The protein is T cell receptor beta variable 13 of Homo sapiens (Human).